Consider the following 390-residue polypeptide: 8-amino-7-oxononanoate synthase (390 aa).

Arg-19 provides a ligand contact to substrate. 106–107 (GY) is a pyridoxal 5'-phosphate binding site. His-131 provides a ligand contact to substrate. Pyridoxal 5'-phosphate-binding residues include Ser-176, His-204, and Thr-233. Lys-236 is modified (N6-(pyridoxal phosphate)lysine). Substrate is bound at residue Thr-350.

It belongs to the class-II pyridoxal-phosphate-dependent aminotransferase family. BioF subfamily. As to quaternary structure, homodimer. Pyridoxal 5'-phosphate serves as cofactor.

It carries out the reaction 6-carboxyhexanoyl-[ACP] + L-alanine + H(+) = (8S)-8-amino-7-oxononanoate + holo-[ACP] + CO2. The protein operates within cofactor biosynthesis; biotin biosynthesis. Functionally, catalyzes the decarboxylative condensation of pimeloyl-[acyl-carrier protein] and L-alanine to produce 8-amino-7-oxononanoate (AON), [acyl-carrier protein], and carbon dioxide. In Pseudomonas putida (strain W619), this protein is 8-amino-7-oxononanoate synthase.